The sequence spans 336 residues: Glycerol-3-phosphate dehydrogenase [NAD(P)+] (336 aa).

5 residues coordinate NADPH: Ser14, Trp15, Arg35, Arg36, and Lys109. The sn-glycerol 3-phosphate site is built by Lys109 and Gly139. Ala143 is a binding site for NADPH. Positions 194, 247, 257, 258, and 259 each coordinate sn-glycerol 3-phosphate. Catalysis depends on Lys194, which acts as the Proton acceptor. Residue Arg258 coordinates NADPH. Glu284 lines the NADPH pocket.

It belongs to the NAD-dependent glycerol-3-phosphate dehydrogenase family.

It is found in the cytoplasm. It carries out the reaction sn-glycerol 3-phosphate + NAD(+) = dihydroxyacetone phosphate + NADH + H(+). The catalysed reaction is sn-glycerol 3-phosphate + NADP(+) = dihydroxyacetone phosphate + NADPH + H(+). Its pathway is membrane lipid metabolism; glycerophospholipid metabolism. Functionally, catalyzes the reduction of the glycolytic intermediate dihydroxyacetone phosphate (DHAP) to sn-glycerol 3-phosphate (G3P), the key precursor for phospholipid synthesis. This is Glycerol-3-phosphate dehydrogenase [NAD(P)+] from Streptomyces coelicolor (strain ATCC BAA-471 / A3(2) / M145).